Consider the following 82-residue polypeptide: Small ribosomal subunit protein bS16 (82 aa).

It belongs to the bacterial ribosomal protein bS16 family.

The protein is Small ribosomal subunit protein bS16 of Mannheimia succiniciproducens (strain KCTC 0769BP / MBEL55E).